The chain runs to 276 residues: Digeranylgeranylglyceryl phosphate synthase (276 aa).

7 helical membrane-spanning segments follow: residues 14–34, 40–60, 92–112, 146–166, 202–222, 224–244, and 256–276; these read NCIL…GHFP, LLIF…NDYF, FAVG…LGVI, GAVA…AFLV, VGVL…KASV, VGYY…YLIL, and QKLL…AAIV.

Belongs to the UbiA prenyltransferase family. DGGGP synthase subfamily. The cofactor is Mg(2+).

It is found in the cell membrane. The catalysed reaction is sn-3-O-(geranylgeranyl)glycerol 1-phosphate + (2E,6E,10E)-geranylgeranyl diphosphate = 2,3-bis-O-(geranylgeranyl)-sn-glycerol 1-phosphate + diphosphate. Its pathway is membrane lipid metabolism; glycerophospholipid metabolism. Prenyltransferase that catalyzes the transfer of the geranylgeranyl moiety of geranylgeranyl diphosphate (GGPP) to the C2 hydroxyl of (S)-3-O-geranylgeranylglyceryl phosphate (GGGP). This reaction is the second ether-bond-formation step in the biosynthesis of archaeal membrane lipids. This chain is Digeranylgeranylglyceryl phosphate synthase, found in Thermococcus onnurineus (strain NA1).